Here is a 326-residue protein sequence, read N- to C-terminus: 4-hydroxythreonine-4-phosphate dehydrogenase (326 aa).

Histidine 132 and threonine 133 together coordinate substrate. A divalent metal cation is bound by residues histidine 162, histidine 207, and histidine 262. Residues lysine 270, asparagine 279, and arginine 288 each contribute to the substrate site.

Belongs to the PdxA family. As to quaternary structure, homodimer. Requires Zn(2+) as cofactor. It depends on Mg(2+) as a cofactor. The cofactor is Co(2+).

The protein localises to the cytoplasm. The enzyme catalyses 4-(phosphooxy)-L-threonine + NAD(+) = 3-amino-2-oxopropyl phosphate + CO2 + NADH. The protein operates within cofactor biosynthesis; pyridoxine 5'-phosphate biosynthesis; pyridoxine 5'-phosphate from D-erythrose 4-phosphate: step 4/5. Functionally, catalyzes the NAD(P)-dependent oxidation of 4-(phosphooxy)-L-threonine (HTP) into 2-amino-3-oxo-4-(phosphooxy)butyric acid which spontaneously decarboxylates to form 3-amino-2-oxopropyl phosphate (AHAP). The sequence is that of 4-hydroxythreonine-4-phosphate dehydrogenase from Ruegeria sp. (strain TM1040) (Silicibacter sp.).